Consider the following 358-residue polypeptide: 3-isopropylmalate dehydrogenase (358 aa).

79-92 (GPKWEHLPPDEQPE) contributes to the NAD(+) binding site. R100, R110, R139, and D227 together coordinate substrate. Residues D227, D251, and D255 each contribute to the Mg(2+) site. 285–297 (GSAPDIAGKGVAN) contributes to the NAD(+) binding site.

This sequence belongs to the isocitrate and isopropylmalate dehydrogenases family. LeuB type 1 subfamily. As to quaternary structure, homodimer. Requires Mg(2+) as cofactor. Mn(2+) serves as cofactor.

The protein localises to the cytoplasm. It catalyses the reaction (2R,3S)-3-isopropylmalate + NAD(+) = 4-methyl-2-oxopentanoate + CO2 + NADH. It functions in the pathway amino-acid biosynthesis; L-leucine biosynthesis; L-leucine from 3-methyl-2-oxobutanoate: step 3/4. Functionally, catalyzes the oxidation of 3-carboxy-2-hydroxy-4-methylpentanoate (3-isopropylmalate) to 3-carboxy-4-methyl-2-oxopentanoate. The product decarboxylates to 4-methyl-2 oxopentanoate. The chain is 3-isopropylmalate dehydrogenase from Pseudoalteromonas translucida (strain TAC 125).